The primary structure comprises 164 residues: R-phycoerythrin alpha chain (164 aa).

2 residues coordinate (2R,3E)-phycoerythrobilin: Cys82 and Cys139.

It belongs to the phycobiliprotein family. As to quaternary structure, heterodimer of an alpha and a beta chain. In terms of processing, contains two covalently linked bilin chromophores.

The protein resides in the plastid. The protein localises to the chloroplast thylakoid membrane. Its function is as follows. Light-harvesting photosynthetic bile pigment-protein from the phycobiliprotein complex. The protein is R-phycoerythrin alpha chain (cpeA) of Pyropia haitanensis (Red seaweed).